Consider the following 1147-residue polypeptide: Nucleolar protein 8 (1147 aa).

Residues 8-89 (KRLFVGGLGQ…GTLQIQLAKE (82 aa)) enclose the RRM domain. Lys225 is covalently cross-linked (Glycyl lysine isopeptide (Lys-Gly) (interchain with G-Cter in SUMO2)). 2 positions are modified to phosphoserine: Ser300 and Ser306. Residue Lys316 forms a Glycyl lysine isopeptide (Lys-Gly) (interchain with G-Cter in SUMO2) linkage. A Phosphotyrosine modification is found at Tyr362. Phosphoserine is present on residues Ser364 and Ser365. A Phosphothreonine modification is found at Thr367. The disordered stretch occupies residues 379–401 (KVKNSAESSQPERTVSKKSSFQK). Positions 383-400 (SAESSQPERTVSKKSSFQ) are enriched in polar residues. Ser416 is modified (phosphoserine). Disordered stretches follow at residues 427 to 452 (KFVN…EEYK), 472 to 511 (AGSH…DLYN), 592 to 659 (MENG…PLKA), 686 to 741 (KALE…EDNQ), 766 to 888 (ANLD…NEDE), 932 to 963 (KHDH…AEKL), and 986 to 1017 (SNTD…TLAC). Residues 441 to 450 (DSEESEEDEE) are compositionally biased toward acidic residues. Polar residues-rich tracts occupy residues 592-610 (MENG…TSCQ) and 629-650 (TFEN…STNP). Basic and acidic residues-rich tracts occupy residues 700-714 (SLEK…EDPQ) and 732-741 (AKDKQAEDNQ). Ser704 carries the post-translational modification Phosphoserine. At Thr777 the chain carries Phosphothreonine. Residues Ser783 and Ser787 each carry the phosphoserine modification. Residues 799–809 (CPEKELMKESV) show a composition bias toward basic and acidic residues. Phosphoserine occurs at positions 819, 820, 825, 827, and 872. The segment covering 857–883 (SDERFRMDSRFLESDSEDEKKELNEDK) has biased composition (basic and acidic residues). Coiled coils occupy residues 868–898 (LESD…KTLN) and 937–963 (IYER…AEKL). Residues 994–1011 (DVPRTEAGAREGTGKIRN) are compositionally biased toward basic and acidic residues. Lys1038 participates in a covalent cross-link: Glycyl lysine isopeptide (Lys-Gly) (interchain with G-Cter in SUMO2). Residues 1055-1086 (PNDPRFQDSSSEEEDIAEEADHSKPSPGEAVP) form a disordered region. Residues Ser1063, Ser1064, Ser1065, and Ser1080 each carry the phosphoserine modification.

In terms of assembly, interacts with the GTP form of RRAGA, RRAGC and RRAGD. Interacts with NIP7. Interacts with DDX18; the interaction is RNA-dependent. Interacts with DDX47; the interaction is RNA-dependent. Post-translationally, phosphorylated.

It is found in the nucleus. It localises to the nucleolus. Functionally, plays an essential role in the survival of diffuse-type gastric cancer cells. Acts as a nucleolar anchoring protein for DDX47. May be involved in regulation of gene expression at the post-transcriptional level or in ribosome biogenesis in cancer cells. This Mus musculus (Mouse) protein is Nucleolar protein 8.